The primary structure comprises 324 residues: Probable UDP-sugar transporter protein SLC35A4 (324 aa).

Over 1–18 (MSVEDGGVPGLGRPRKAR) the chain is Cytoplasmic. A helical transmembrane segment spans residues 19 to 39 (WTLMLLLSTAMYGAHAPLLAL). Residues 40-52 (CHVDGRVPFRPSS) are Lumenal-facing. A helical membrane pass occupies residues 53–73 (AVLLTELTKLLLCALSLLVGW). Residues 74 to 85 (QAWPQGTPPWRQ) are Cytoplasmic-facing. The helical transmembrane segment at 86–106 (AAPFALSALLYGANNNLVIYL) threads the bilayer. Residues 107–141 (QRYMDPSTYQVLSNLKIGSTALFYCLCLRHRLSAR) are Lumenal-facing. The chain crosses the membrane as a helical span at residues 142 to 162 (QGLALLLLMAAGACYAAGGLQ). The Cytoplasmic segment spans residues 163-180 (DPGTTLPGPPSAAATSPM). The chain crosses the membrane as a helical span at residues 181–201 (PLHITPLGLLLLILYCLISGL). Over 202–214 (SSVYTELLMKRQR) the chain is Lumenal. A helical transmembrane segment spans residues 215–235 (LPLALQNLFLYSFGVLLNLGL). Topologically, residues 236 to 248 (HAGGGPGPGLLEG) are cytoplasmic. The chain crosses the membrane as a helical span at residues 249–271 (FSGWMALVVLSQALNGLLMSAVM). Residues 272 to 275 (KHGS) lie on the Lumenal side of the membrane. The helical transmembrane segment at 276 to 298 (SITRLFVVSCSLVVNAVLSAALL) threads the bilayer. Residues 299–324 (RLQLTAAFFLATLLIGLAVRLYYGSR) are Cytoplasmic-facing.

Belongs to the nucleotide-sugar transporter family. SLC35A subfamily. Found in a complex with SLC35A2 and SLC35A3.

Its subcellular location is the golgi apparatus membrane. The enzyme catalyses CDP-L-ribitol(in) + CDP(out) = CDP-L-ribitol(out) + CDP(in). Its function is as follows. Mediates the transport of CDP-ribitol. Does not exhibit CMP-sialic acid, UDP-galactose and UDP-N-acetylglucosamine transport activity. This Bos taurus (Bovine) protein is Probable UDP-sugar transporter protein SLC35A4.